A 320-amino-acid chain; its full sequence is Ribosome biogenesis protein BRX1 homolog 2 (320 aa).

Residues Met1–Gly40 are disordered. Over residues Lys17–Gly40 the composition is skewed to basic and acidic residues. The Brix domain occupies Glu57–Gly260. The interval Arg297–Glu320 is disordered. The span at Glu308–Glu320 shows a compositional bias: acidic residues.

Belongs to the BRX1 family. In terms of tissue distribution, expressed in roots, rosette leaves, stems, flowers, siliques and seeds.

It localises to the nucleus. It is found in the nucleolus. Its function is as follows. Involved in pre-rRNA processing and required for biogenesis of the large (60S) ribosomal subunit. Required for proper development. This is Ribosome biogenesis protein BRX1 homolog 2 from Arabidopsis thaliana (Mouse-ear cress).